The following is a 507-amino-acid chain: Blue light receptor lreB (507 aa).

The region spanning Arg-170–Thr-234 is the PAS domain. The segment at Cys-463–Cys-488 adopts a GATA-type zinc-finger fold.

Probable transcription factor involved in light regulation. Plays crucial roles in fungal growth and asexual development. Involved in conidiophore formation, sclerotium production, and conidial stress tolerance. Positively regulates the fungal pathogenicity towards maize and aflatoxin B1 production. In Aspergillus flavus, this protein is Blue light receptor lreB.